The sequence spans 316 residues: Probable cell division protein WhiA (316 aa).

The segment at residues 275–309 (TLKELGEMVSGGKISKSGINHRLRKIDEIAEKLRA) is a DNA-binding region (H-T-H motif).

Belongs to the WhiA family.

Involved in cell division and chromosome segregation. This chain is Probable cell division protein WhiA, found in Bacillus mycoides (strain KBAB4) (Bacillus weihenstephanensis).